Consider the following 218-residue polypeptide: Thiopurine S-methyltransferase (218 aa).

Residues W10, L45, E66, and R123 each coordinate S-adenosyl-L-methionine.

It belongs to the class I-like SAM-binding methyltransferase superfamily. TPMT family.

Its subcellular location is the cytoplasm. The enzyme catalyses S-adenosyl-L-methionine + a thiopurine = S-adenosyl-L-homocysteine + a thiopurine S-methylether.. This chain is Thiopurine S-methyltransferase, found in Shewanella sp. (strain ANA-3).